The primary structure comprises 268 residues: Glucosamine-6-phosphate deaminase (268 aa).

Asp-67 serves as the catalytic Proton acceptor; for enolization step. The active-site For ring-opening step is Asn-136. The Proton acceptor; for ring-opening step role is filled by His-138. Residue Glu-143 is the For ring-opening step of the active site.

The protein belongs to the glucosamine/galactosamine-6-phosphate isomerase family. NagB subfamily. Homohexamer.

The enzyme catalyses alpha-D-glucosamine 6-phosphate + H2O = beta-D-fructose 6-phosphate + NH4(+). The protein operates within amino-sugar metabolism; N-acetylneuraminate degradation; D-fructose 6-phosphate from N-acetylneuraminate: step 5/5. Catalyzes the reversible isomerization-deamination of glucosamine 6-phosphate (GlcN6P) to form fructose 6-phosphate (Fru6P) and ammonium ion. The sequence is that of Glucosamine-6-phosphate deaminase from Shewanella loihica (strain ATCC BAA-1088 / PV-4).